Reading from the N-terminus, the 592-residue chain is LIM domain-binding protein 1 (592 aa).

2 disordered regions span residues 14–41 (GHPP…NSQN) and 305–368 (PAPE…NPMT). A compositionally biased stretch (polar residues) spans 23–41 (ESSNSHYGMPPSQGTNSQN). Over residues 322–344 (PAANPRGSKKATAAAAAAAAAAT) the composition is skewed to low complexity. Over residues 352 to 368 (PTASPANNQQFPPNPMT) the composition is skewed to polar residues. One can recognise an LIM interaction domain (LID) domain in the interval 378 to 417 (DVMVVGEPSMMGSEFGENDERTISRVENSQYDPNAMQMQS). Disordered stretches follow at residues 437-458 (HHPG…MGSQ) and 559-592 (GGMQ…MITG). Residues 577–586 (GPPPQWPPPN) are compositionally biased toward pro residues.

This sequence belongs to the LDB family. As to quaternary structure, interacts with blmp-1. As to expression, expressed in all neurons and some other tissues of the adult, including vulval muscle, and, in males, all the neurons of the tail region. Expressed in vulval cells.

Binds to the LIM domain of LIM domain-containing transcription factors. Required for the blmp-1-mediated transcriptional activation or repression of several hypodermal genes, such as bed-3. Regulates sam-10 nuclear localization in PLM neurons. Has a role in synaptic differentiation of PLM mechanosensory neurons. Involved in gonadogenesis. The chain is LIM domain-binding protein 1 from Caenorhabditis elegans.